A 670-amino-acid polypeptide reads, in one-letter code: Transketolase, plasmid (670 aa).

His32 provides a ligand contact to substrate. Residues His72 and 120–122 contribute to the thiamine diphosphate site; that span reads GPL. Position 161 (Asp161) interacts with Mg(2+). Thiamine diphosphate contacts are provided by Gly162 and Asn191. Positions 191 and 193 each coordinate Mg(2+). Substrate contacts are provided by His267, Arg364, and Ser391. His267 provides a ligand contact to thiamine diphosphate. Residue Glu417 is the Proton donor of the active site. Phe443 provides a ligand contact to thiamine diphosphate. Substrate contacts are provided by His467, Asp475, and Arg526.

Belongs to the transketolase family. As to quaternary structure, homodimer. Requires Mg(2+) as cofactor. Ca(2+) is required as a cofactor. Mn(2+) serves as cofactor. It depends on Co(2+) as a cofactor. The cofactor is thiamine diphosphate.

It catalyses the reaction D-sedoheptulose 7-phosphate + D-glyceraldehyde 3-phosphate = aldehydo-D-ribose 5-phosphate + D-xylulose 5-phosphate. The protein operates within carbohydrate biosynthesis; Calvin cycle. Catalyzes the transfer of a two-carbon ketol group from a ketose donor to an aldose acceptor, via a covalent intermediate with the cofactor thiamine pyrophosphate. The protein is Transketolase, plasmid (cbbTP) of Cupriavidus necator (strain ATCC 17699 / DSM 428 / KCTC 22496 / NCIMB 10442 / H16 / Stanier 337) (Ralstonia eutropha).